The sequence spans 61 residues: Metallothionein-2E (61 aa).

Met-1 bears the N-acetylmethionine mark. The interval 1 to 29 (MDPNCSCATRDSCACASSCKCKECKCTSC) is beta. Positions 5, 7, 13, 15, 19, 21, 24, 26, 29, 33, 34, 36, 37, 41, 44, 48, 50, 57, 59, and 60 each coordinate a divalent metal cation. Positions 30–61 (KKSCCSCCPAGCTKCAQGCICKGALDKCSCCA) are alpha.

Belongs to the metallothionein superfamily. Type 1 family. Monomer.

In terms of biological role, metallothioneins have a high content of cysteine residues that bind various heavy metals; these proteins are transcriptionally regulated by both heavy metals and glucocorticoids. This is Metallothionein-2E from Oryctolagus cuniculus (Rabbit).